Here is a 159-residue protein sequence, read N- to C-terminus: 2-C-methyl-D-erythritol 2,4-cyclodiphosphate synthase (159 aa).

Positions 8 and 10 each coordinate a divalent metal cation. 4-CDP-2-C-methyl-D-erythritol 2-phosphate-binding positions include 8 to 10 (DVH) and 34 to 35 (HS). H42 lines the a divalent metal cation pocket. 4-CDP-2-C-methyl-D-erythritol 2-phosphate is bound by residues 56–58 (DIG), 61–65 (FPDTD), 100–106 (AQAPKML), 132–135 (TTTE), F139, and R142.

This sequence belongs to the IspF family. As to quaternary structure, homotrimer. It depends on a divalent metal cation as a cofactor.

The catalysed reaction is 4-CDP-2-C-methyl-D-erythritol 2-phosphate = 2-C-methyl-D-erythritol 2,4-cyclic diphosphate + CMP. It participates in isoprenoid biosynthesis; isopentenyl diphosphate biosynthesis via DXP pathway; isopentenyl diphosphate from 1-deoxy-D-xylulose 5-phosphate: step 4/6. Functionally, involved in the biosynthesis of isopentenyl diphosphate (IPP) and dimethylallyl diphosphate (DMAPP), two major building blocks of isoprenoid compounds. Catalyzes the conversion of 4-diphosphocytidyl-2-C-methyl-D-erythritol 2-phosphate (CDP-ME2P) to 2-C-methyl-D-erythritol 2,4-cyclodiphosphate (ME-CPP) with a corresponding release of cytidine 5-monophosphate (CMP). This chain is 2-C-methyl-D-erythritol 2,4-cyclodiphosphate synthase, found in Citrobacter koseri (strain ATCC BAA-895 / CDC 4225-83 / SGSC4696).